A 60-amino-acid chain; its full sequence is Large ribosomal subunit protein eL37 (60 aa).

Residues Cys-19, Cys-22, Cys-34, and Cys-37 each contribute to the Zn(2+) site. A C4-type zinc finger spans residues Cys-19–Cys-37.

It belongs to the eukaryotic ribosomal protein eL37 family. Requires Zn(2+) as cofactor.

Functionally, binds to the 23S rRNA. The sequence is that of Large ribosomal subunit protein eL37 from Methanoregula boonei (strain DSM 21154 / JCM 14090 / 6A8).